The chain runs to 250 residues: mRNA-decapping protein g5R (250 aa).

The Nudix hydrolase domain occupies 97–243; that stretch reads QKFRKNWLLP…IIGPAFNFIK (147 aa). Positions 132–153 match the Nudix box motif; it reads GKPKEDESDLTCAIREFEEETG. Glutamate 138 is a binding site for Mg(2+). The active-site Nucleophile is the glutamate 147. Mg(2+)-binding residues include glutamate 151 and aspartate 173.

The protein belongs to the Nudix hydrolase family. DIPP subfamily. In terms of assembly, interacts with host RPL23A. The cofactor is Mg(2+). Mn(2+) serves as cofactor.

It localises to the host rough endoplasmic reticulum. The enzyme catalyses diphospho-myo-inositol polyphosphate + H2O = myo-inositol polyphosphate + phosphate.. Its function is as follows. Decapping enzyme required for the removal of the 5'-end m7GpppN cap tethered to viral and host mRNAs to allow their decay in cells. May therefore accelerate viral and cellular mRNA turnover to eliminate competing host mRNAs and allow stage-specific synthesis of viral proteins. Acceleration of the turnover of cellular transcripts may even promote the shutoff of host protein synthesis. In addition to the mRNA cap, g5R also efficiently hydrolyzes diphosphoinositol polyphosphates. Down-regulation of the level of PP-InsP5 (diphosphoinositol pentakisphosphate) may play a role in viral manipulation of the cellular secretory pathway, a step necessary for the formation of virions. Binds viral and cellular poly(A) mRNAs, thereby decreasing both types of mRNAs. The polypeptide is mRNA-decapping protein g5R (African swine fever virus (isolate Tick/South Africa/Pretoriuskop Pr4/1996) (ASFV)).